A 142-amino-acid polypeptide reads, in one-letter code: MMSFVSLLLVGILFHATQAEQLTKCEVFRELKDLKDYGGVSLPEWVCTAFHTSGYDTQAIVQNNDSTEYGLFQINNKIWCKDDQNPHSSNICNISCDKFLDDDLTDDIMCVKKILDKVGINYWLAHKALCSEKLDQWLCEKL.

Positions 1 to 18 are cleaved as a signal peptide; that stretch reads MMSFVSLLLVGILFHATQ. Residues 20–142 form the C-type lysozyme domain; the sequence is EQLTKCEVFR…KLDQWLCEKL (123 aa). Disulfide bonds link Cys25–Cys139, Cys47–Cys130, Cys80–Cys96, and Cys92–Cys110. 2 N-linked (GlcNAc...) asparagine glycosylation sites follow: Asn64 and Asn93. Positions 98, 101, 103, 106, and 107 each coordinate Ca(2+).

It belongs to the glycosyl hydrolase 22 family. Lactose synthase (LS) is a heterodimer of a catalytic component, beta1,4-galactosyltransferase (beta4Gal-T1) and a regulatory component, alpha-lactalbumin (LA). Mammary gland specific. Secreted in milk.

It is found in the secreted. Functionally, regulatory subunit of lactose synthase, changes the substrate specificity of galactosyltransferase in the mammary gland making glucose a good acceptor substrate for this enzyme. This enables LS to synthesize lactose, the major carbohydrate component of milk. In other tissues, galactosyltransferase transfers galactose onto the N-acetylglucosamine of the oligosaccharide chains in glycoproteins. The protein is Alpha-lactalbumin (LALBA) of Bubalus bubalis (Domestic water buffalo).